The following is a 184-amino-acid chain: Ribosome-recycling factor (184 aa).

Residues 133-153 (DSNDELKKQQKNSDITEDDLR) form a disordered region.

This sequence belongs to the RRF family.

It is found in the cytoplasm. In terms of biological role, responsible for the release of ribosomes from messenger RNA at the termination of protein biosynthesis. May increase the efficiency of translation by recycling ribosomes from one round of translation to another. This Staphylococcus saprophyticus subsp. saprophyticus (strain ATCC 15305 / DSM 20229 / NCIMB 8711 / NCTC 7292 / S-41) protein is Ribosome-recycling factor.